The primary structure comprises 473 residues: Cytochrome c-552 (473 aa).

Positions 1 to 33 (MQHGDEMMKKMTGKSFALSALVAASFMAAGAMA) are cleaved as a signal peptide. A heme c-binding site is contributed by histidine 93. Residues cysteine 121, cysteine 124, and lysine 125 each coordinate heme. The heme c site is built by cysteine 159, cysteine 162, histidine 163, cysteine 201, cysteine 204, and histidine 205. Positions 207, 208, 256, and 258 each coordinate Ca(2+). Tyrosine 208 is a substrate binding site. Histidine 259 provides a ligand contact to substrate. 9 residues coordinate heme c: histidine 270, cysteine 277, cysteine 280, histidine 281, histidine 296, cysteine 309, cysteine 312, histidine 313, and histidine 388.

The protein belongs to the cytochrome c-552 family. Ca(2+) is required as a cofactor. The cofactor is heme c.

Its subcellular location is the periplasm. It catalyses the reaction 6 Fe(III)-[cytochrome c] + NH4(+) + 2 H2O = 6 Fe(II)-[cytochrome c] + nitrite + 8 H(+). It functions in the pathway nitrogen metabolism; nitrate reduction (assimilation). In terms of biological role, catalyzes the reduction of nitrite to ammonia, consuming six electrons in the process. This is Cytochrome c-552 from Shewanella sp. (strain ANA-3).